The following is a 352-amino-acid chain: C-C chemokine receptor type 5 (352 aa).

Residues 1–30 (MDYQVSSPIYDINYYTSEPCQKINVKQIAA) are Extracellular-facing. At Tyr-3 the chain carries Sulfotyrosine. Residues Ser-6 and Ser-7 are each glycosylated (O-linked (GalNAc...) serine). A sulfotyrosine mark is found at Tyr-10, Tyr-14, and Tyr-15. Intrachain disulfides connect Cys-20-Cys-269 and Cys-101-Cys-178. A helical transmembrane segment spans residues 31 to 58 (RLLPPLYSLVFIFGFVGNMLVILILINC). Residues 59 to 68 (KRLKSMTDIY) lie on the Cytoplasmic side of the membrane. The chain crosses the membrane as a helical span at residues 69-89 (LLNLAISDLFFLLTVPFWAHY). The Extracellular portion of the chain corresponds to 90 to 102 (AAAQWDFGNTMCQ). The chain crosses the membrane as a helical span at residues 103–124 (LLTGLYFIGFFSGIFFIILLTI). At 125–141 (DRYLAVVHAVFALKART) the chain is on the cytoplasmic side. A helical transmembrane segment spans residues 142 to 166 (VTFGVVTSVITWVVAVFASLPGIIF). The Extracellular segment spans residues 167-198 (TRSQKEGLHYTCSSHFPYSQYQFWKNFQTLKI). Residues 199–218 (VILGLVLPLLVMVICYSGIL) form a helical membrane-spanning segment. Over 219 to 235 (KTLLRCRNEKKRHRAVR) the chain is Cytoplasmic. Residues 236 to 260 (LIFTIMIVYFLFWAPYNIVLLLNTF) form a helical membrane-spanning segment. The Extracellular segment spans residues 261 to 277 (QEFFGLNNCSSSNRLDQ). Residues 278–301 (AMQVTETLGMTHCCINPIIYAFVG) traverse the membrane as a helical segment. Topologically, residues 302-352 (EKFRNYLLVFFQKHIAKRFCKCCSIFQQEAPERASSVYTRSTGEQEISVGL) are cytoplasmic. Residues Cys-321, Cys-323, and Cys-324 are each lipidated (S-palmitoyl cysteine). Ser-336, Ser-337, Ser-342, and Ser-349 each carry phosphoserine; by BARK1.

The protein belongs to the G-protein coupled receptor 1 family. In terms of assembly, interacts with PRAF2. Efficient ligand binding to CCL3/MIP-1alpha and CCL4/MIP-1beta requires sulfation, O-glycosylation and sialic acid modifications. Glycosylation on Ser-6 is required for efficient binding of CCL4. Interacts with GRK2. Interacts with ARRB1 and ARRB2. Interacts with CNIH4. Interacts with S100A4; this interaction stimulates T-lymphocyte chemotaxis. (Microbial infection) Interacts with HIV-1 surface protein gp120. As to quaternary structure, (Microbial infection) May interact with human cytomegalovirus/HHV-5 protein UL78. Post-translationally, sulfated on at least 2 of the N-terminal tyrosines. Sulfation contributes to the efficiency of HIV-1 entry and is required for efficient binding of the chemokines, CCL3 and CCL4. In terms of processing, O-glycosylated, but not N-glycosylated. Ser-6 appears to be the major site even if Ser-7 may be also O-glycosylated. Also sialylated glycans present which contribute to chemokine binding. Thr-16 and Ser-17 may also be glycosylated and, if so, with small moieties such as a T-antigen. Palmitoylation in the C-terminal is important for cell surface expression, and to a lesser extent, for HIV entry. Post-translationally, phosphorylation on serine residues in the C-terminal is stimulated by binding CC chemokines especially by APO-RANTES. As to expression, highly expressed in spleen, thymus, in the myeloid cell line THP-1, in the promyeloblastic cell line KG-1a and on CD4+ and CD8+ T-cells. Medium levels in peripheral blood leukocytes and in small intestine. Low levels in ovary and lung.

Its subcellular location is the cell membrane. Functionally, receptor for a number of inflammatory CC-chemokines including CCL3/MIP-1-alpha, CCL4/MIP-1-beta and RANTES and subsequently transduces a signal by increasing the intracellular calcium ion level. May play a role in the control of granulocytic lineage proliferation or differentiation. Participates in T-lymphocyte migration to the infection site by acting as a chemotactic receptor. (Microbial infection) Acts as a coreceptor (CD4 being the primary receptor) of human immunodeficiency virus-1/HIV-1. This chain is C-C chemokine receptor type 5, found in Homo sapiens (Human).